The primary structure comprises 623 residues: tRNA uridine 5-carboxymethylaminomethyl modification enzyme MnmG (623 aa).

FAD is bound by residues 11-16 (GAGHAG), V123, and S178. 270-284 (GPRYCPSIETKIVTF) serves as a coordination point for NAD(+). Q367 lines the FAD pocket.

Belongs to the MnmG family. Homodimer. Heterotetramer of two MnmE and two MnmG subunits. FAD serves as cofactor.

It is found in the cytoplasm. Functionally, NAD-binding protein involved in the addition of a carboxymethylaminomethyl (cmnm) group at the wobble position (U34) of certain tRNAs, forming tRNA-cmnm(5)s(2)U34. The protein is tRNA uridine 5-carboxymethylaminomethyl modification enzyme MnmG of Phocaeicola vulgatus (strain ATCC 8482 / DSM 1447 / JCM 5826 / CCUG 4940 / NBRC 14291 / NCTC 11154) (Bacteroides vulgatus).